The sequence spans 321 residues: Carnitine monooxygenase reductase subunit (321 aa).

The FAD-binding FR-type domain occupies 4–109 (YQMFEVQVSQ…STPNNLFALI (106 aa)). In terms of domain architecture, 2Fe-2S ferredoxin-type spans 233-321 (DAFTLVLARS…AKGKRLVLDL (89 aa)). [2Fe-2S] cluster contacts are provided by Cys-270, Cys-275, Cys-278, and Cys-308.

This sequence belongs to the PDR/VanB family. CntB subfamily. As to quaternary structure, composed of an oxygenase subunit (yeaW) and a reductase subunit (yeaX). The cofactor is FMN. It depends on [2Fe-2S] cluster as a cofactor.

The enzyme catalyses (R)-carnitine + NADH + O2 + H(+) = (3R)-3-hydroxy-4-oxobutanoate + trimethylamine + NAD(+) + H2O. It catalyses the reaction (R)-carnitine + NADPH + O2 + H(+) = (3R)-3-hydroxy-4-oxobutanoate + trimethylamine + NADP(+) + H2O. It functions in the pathway amine and polyamine metabolism; carnitine metabolism. Functionally, converts carnitine to trimethylamine and malic semialdehyde. Can also use gamma-butyrobetaine, choline and betaine as substrates. The protein is Carnitine monooxygenase reductase subunit (yeaX) of Escherichia coli (strain K12).